The following is a 228-amino-acid chain: MHYLRYFAIAFLLLLSSCSVTRHKPLIEGSTTTIPNTPSSNFINGSIFQQDNSLYYGYQPLFEDRRPKNIGDILTVLLQENVSASKSSSSNASRKSNANLEMNALPKIINKIIGNDQLSTDINSNNGFNGKGGSSAANTFSGTITVTVIDILTNGNLKVIGEKKISINQGTESIRFYGIVNPKTIDHNNQVMSNLISDSKIEYIGDGYINEVQKMNWLQRLFLNYFPF.

Residues 1–17 (MHYLRYFAIAFLLLLSS) form the signal peptide. Cysteine 18 carries N-palmitoyl cysteine lipidation. Cysteine 18 carries S-diacylglycerol cysteine lipidation.

This sequence belongs to the FlgH family. As to quaternary structure, the basal body constitutes a major portion of the flagellar organelle and consists of four rings (L,P,S, and M) mounted on a central rod.

Its subcellular location is the cell membrane. The protein resides in the bacterial flagellum basal body. Assembles around the rod to form the L-ring and probably protects the motor/basal body from shearing forces during rotation. This Wigglesworthia glossinidia brevipalpis protein is Flagellar L-ring protein.